Consider the following 401-residue polypeptide: Phosphoglycerate kinase (401 aa).

Residues 20–22, Arg-35, 58–61, Arg-117, and Arg-154 each bind substrate; these read DFN and HLGR. Residues Lys-204, Gly-298, Glu-329, and 358–361 each bind ATP; that span reads GGDS.

The protein belongs to the phosphoglycerate kinase family. Monomer.

Its subcellular location is the cytoplasm. The catalysed reaction is (2R)-3-phosphoglycerate + ATP = (2R)-3-phospho-glyceroyl phosphate + ADP. The protein operates within carbohydrate degradation; glycolysis; pyruvate from D-glyceraldehyde 3-phosphate: step 2/5. This Bifidobacterium longum (strain DJO10A) protein is Phosphoglycerate kinase.